Consider the following 159-residue polypeptide: Ribosomal RNA large subunit methyltransferase H (159 aa).

Residues Leu-76, Gly-108, and 127–132 (FSKMTF) contribute to the S-adenosyl-L-methionine site.

This sequence belongs to the RNA methyltransferase RlmH family. As to quaternary structure, homodimer.

The protein localises to the cytoplasm. It catalyses the reaction pseudouridine(1915) in 23S rRNA + S-adenosyl-L-methionine = N(3)-methylpseudouridine(1915) in 23S rRNA + S-adenosyl-L-homocysteine + H(+). In terms of biological role, specifically methylates the pseudouridine at position 1915 (m3Psi1915) in 23S rRNA. This chain is Ribosomal RNA large subunit methyltransferase H, found in Clostridium botulinum (strain Eklund 17B / Type B).